Here is a 707-residue protein sequence, read N- to C-terminus: Leucine-rich repeat neuronal protein 3 (707 aa).

Residues 1-22 (MKDAPLQIHVLLGLAITALVQA) form the signal peptide. Residues 23–69 (GDKKVDCPQLCTCEIRPWFTPRSIYMEASTVDCNDLGLLNFPARLPA) form the LRRNT domain. Over 23–626 (GDKKVDCPQL…DGKENGKSHT (604 aa)) the chain is Extracellular. LRR repeat units lie at residues 70-91 (DTQI…TDFP), 93-114 (NLTG…NVQK), 117-138 (QLLS…CLYG), 141-162 (NLQE…AFVG), 165-186 (NLLR…WFEA), 189-210 (NLEI…NFQP), 213-234 (KLRS…ALVG), 237-258 (NLES…ALQK), 261-282 (NLKF…DFSN), 285-304 (HLKE…DSLA), 310-332 (DLRK…AFFR), and 335-358 (KLES…ESLP). Residues asparagine 93 and asparagine 103 are each glycosylated (N-linked (GlcNAc...) asparagine). A glycan (N-linked (GlcNAc...) asparagine) is linked at asparagine 223. Residues 368 to 421 (NPIRCDCVIRWINMNKTNIRFMEPDSLFCVDPPEFQGQNVRQVHFRDMMEICLP) form the LRRCT domain. N-linked (GlcNAc...) asparagine glycosylation is present at asparagine 382. One can recognise an Ig-like C2-type domain in the interval 421–514 (PLIAPESFPS…DLKSIMIKVG (94 aa)). Cysteine 444 and cysteine 496 are joined by a disulfide. 3 N-linked (GlcNAc...) asparagine glycosylation sites follow: asparagine 522, asparagine 579, and asparagine 608. The region spanning 523–614 (GSLNIKIRDI…QCVNVTTKSL (92 aa)) is the Fibronectin type-III domain. Residues 627–647 (VFVACVGGLLGIIGVMCLFGC) form a helical membrane-spanning segment. The Cytoplasmic portion of the chain corresponds to 648 to 707 (VSQEGNCENEHSYTVNHCHKPTLAFSELYPPLINLWESSKEKPASLEVKATAIGVPTSMS).

The protein resides in the membrane. The polypeptide is Leucine-rich repeat neuronal protein 3 (Lrrn3) (Rattus norvegicus (Rat)).